The primary structure comprises 235 residues: ATP phosphoribosyltransferase (235 aa).

This sequence belongs to the ATP phosphoribosyltransferase family. Short subfamily. As to quaternary structure, heteromultimer composed of HisG and HisZ subunits.

It is found in the cytoplasm. It catalyses the reaction 1-(5-phospho-beta-D-ribosyl)-ATP + diphosphate = 5-phospho-alpha-D-ribose 1-diphosphate + ATP. It functions in the pathway amino-acid biosynthesis; L-histidine biosynthesis; L-histidine from 5-phospho-alpha-D-ribose 1-diphosphate: step 1/9. Catalyzes the condensation of ATP and 5-phosphoribose 1-diphosphate to form N'-(5'-phosphoribosyl)-ATP (PR-ATP). Has a crucial role in the pathway because the rate of histidine biosynthesis seems to be controlled primarily by regulation of HisG enzymatic activity. This is ATP phosphoribosyltransferase from Synechococcus sp. (strain JA-2-3B'a(2-13)) (Cyanobacteria bacterium Yellowstone B-Prime).